The sequence spans 105 residues: Heat shock protein HspQ (105 aa).

A disordered region spans residues Glu-76 to Asn-105.

This sequence belongs to the HspQ family.

It localises to the cytoplasm. Its function is as follows. Involved in the degradation of certain denaturated proteins, including DnaA, during heat shock stress. The chain is Heat shock protein HspQ from Salmonella agona (strain SL483).